We begin with the raw amino-acid sequence, 1220 residues long: MGATGPTGAGGRATWVLAGNILAAALVLGSGPRALPPSFPALGPGSPSRPGPAGPWASSQYSDISREARGPFENGVIFQKCSLVSGQSESQTMHVQLSVNNTRTPTSVNLSNLLVLDEITGLAVKESPGNNTQDGIQTFRKSFLQVGECYSVSYTASLDPTALGTGESLDLPARLIFQSPSQNRTQLKAPFTITVEEKIMVLPNHGLHAAGFIAAFLISLLLTVAALFFLARGRCLQGGMLSRCRIQHPENKLEPSPFTSANGVSQDLSLNDQVVAILTSEEPGSMLQALEELEIATLNQADADLEACRNQISKDIIALLMKNLVSGGHLSPQTERKMAAAFKKQFLLLENEIQEEYERKMLALTAECDLEMRKKTENQYQREMVAMEEAEEVLKRVSERSAAECSSLLRTLHGLEQEDMQRSLTLDQAEDFAQAHRQLAVFQRNELHSIVYTQIQSAVSKGELRPEVAKMMLQDYSKTQESVEELMDFFQATKRYHLSKRFGHREYLVQRLQAMETRVQGLLNTAATQLTSLIHKHERAGYLDEDQMETLLERAQTETFSIKQKLDNDLKQEKKRLHQRLITRRRRELLQKHKEQQKEQVSLGEASSTAEDAVQYLHQWRSVMAEHTAALEELQERLDQAALDDLRVLTVSLSEKATEELRRLQSTAMTQELLKRSAPWLFLQQILEEHSRESAARTTQLEAEERERGQELVQGVRQRLQQDALEAYTEEQAELRHWEHLVFMKLCCAAISLSEEDLLRVRQEAQGCFSQLDRSLALPRVRARVLQQQAQMAWREAEFRKLDQALAAPELQSKARKLRSKGRGKADLLKKNLEDKIRLFEERAPVELADQVRGELLQERVQRLEAQEAHFAESLVALQFQKVARAAETLSVYTALLSIQDLLLGELSESETLTKSACVQILESHRPELQELQELERKLEDQLVQQEEAEQQRVLESWQRWAADGPGLSEPEEMDPERQVSAILRQALNKGQKLLEQHQQRVREEWQNGAVLEDSLESIEADTMASLCSQGLRLVSYLSRMTMVPGSTLLRLLSVVLPAASQPQLLALLDAVSEKHSDHTAENESSGEQAQAEQSKRRKHQVWWKVLDSRFRADLVSQGLERMLWARQKKERILKKIYVPVQERVMFPGKGSWPHLSLEPIGELAPIPITGADAMDILNTGEKIFVFRSPREPEISLRVPPRRKKNFLNAKKANRALGLD.

Residues 1 to 29 (MGATGPTGAGGRATWVLAGNILAAALVLG) form the signal peptide. Residues 30-210 (SGPRALPPSF…VLPNHGLHAA (181 aa)) are Extracellular-facing. The segment at 38 to 59 (SFPALGPGSPSRPGPAGPWASS) is disordered. N-linked (GlcNAc...) asparagine glycans are attached at residues asparagine 100, asparagine 109, and asparagine 130. Residues 211–231 (GFIAAFLISLLLTVAALFFLA) form a helical membrane-spanning segment. The Cytoplasmic segment spans residues 232–1220 (RGRCLQGGML…KKANRALGLD (989 aa)). 4 coiled-coil regions span residues 355-404 (EEYE…SAAE), 563-644 (KQKL…AALD), 854-875 (GELLQERVQRLEAQEAHFAESL), and 920-1005 (QILE…VREE).

As to quaternary structure, component of the EvC complex composed of EFCAB7, IQCE, EVC2 and EVC; built from two subcomplexes, EVC2:EVC and EFCAB7:IQCE. Interacts with EVC. Interacts (via N-terminal end) with EFCAB7. Interacts (via N-terminal end) with IQCE. In terms of tissue distribution, expressed in long and cranial bones, kidney and heart. Strongly expressed in proliferating chondrocytes, osteoblasts and osteoclasts.

It localises to the cell membrane. The protein localises to the cytoplasm. It is found in the cytoskeleton. Its subcellular location is the cilium basal body. The protein resides in the cell projection. It localises to the cilium. The protein localises to the cilium membrane. It is found in the nucleus. Component of the EvC complex that positively regulates ciliary Hedgehog (Hh) signaling. Plays a critical role in bone formation and skeletal development. May be involved in early embryonic morphogenesis. The protein is Limbin (Evc2) of Mus musculus (Mouse).